We begin with the raw amino-acid sequence, 387 residues long: Odorant receptor 19a (387 aa).

The Cytoplasmic segment spans residues 1–40 (MDISKVDSTRALVNHWRIFRIMGIHPPGKRTFWGRHYTAY). The chain crosses the membrane as a helical span at residues 41–61 (SMVWNVTFHICIWVSFSVNLL). The Extracellular portion of the chain corresponds to 62–71 (QSNSLETFCE). The helical transmembrane segment at 72–92 (SLCVTMPHTLYMLKLINVRRM) threads the bilayer. The Cytoplasmic segment spans residues 93-127 (RGQMISSHWLLRLLDKRLGCDDERQIIMAGIERAE). The helical transmembrane segment at 128–148 (FIFRTIFRGLACTVVLGIIYI) threads the bilayer. The Extracellular portion of the chain corresponds to 149–171 (SASSEPTLMYPTWIPWNWRDSTS). Residues 172–192 (AYLATAMLHTTALMANATLVL) traverse the membrane as a helical segment. Over 193–254 (NLSSYPGTYL…LRLFKSLERS (62 aa)) the chain is Cytoplasmic. A helical membrane pass occupies residues 255–275 (LSMTCFLQFFSTACAQCTICY). At 276–285 (FLLFGNVGIM) the chain is on the extracellular side. A helical transmembrane segment spans residues 286 to 306 (RFMNMLFLLVILTTETLLLCY). Over 307-336 (TAELPCKEGESLLTAVYSCNWLSQSVNFRR) the chain is Cytoplasmic. The chain crosses the membrane as a helical span at residues 337–357 (LLLLMLARCQIPMILVSGVIV). Topologically, residues 358–387 (PISMKTFTVMIKGAYTMLTLLNEIRKTSLE) are extracellular.

Belongs to the insect chemoreceptor superfamily. Heteromeric odorant receptor channel (TC 1.A.69) family. Or2a subfamily. As to quaternary structure, interacts with Orco. Complexes exist early in the endomembrane system in olfactory sensory neurons (OSNs), coupling these complexes to the conserved ciliary trafficking pathway. Expressed in ai2A olfactory sensory neurons in the antenna.

The protein resides in the cell membrane. Functionally, odorant receptor which mediates acceptance or avoidance behavior, depending on its substrates. The odorant receptor repertoire encodes a large collection of odor stimuli that vary widely in identity, intensity, and duration. May form a complex with Orco to form odorant-sensing units, providing sensitive and prolonged odorant signaling and calcium permeability. Involved in the preference for citrus fruits for oviposition, especially through the response to valencene, the primary ligand of Or19a. Larvae growing on citrus fruits suffer a reduced risk of parasitism since endoparasitoid wasps that parasitize larvae are strongly repelled by the smell of citrus, as well as by valencene. The sequence is that of Odorant receptor 19a (Or19a) from Drosophila melanogaster (Fruit fly).